Reading from the N-terminus, the 279-residue chain is MYDLTGKHVCYVADCGGIALETSKVLMTKNIAKLAVLQSVENQPAIAQLQSIKHSTQIFFWTFDVTMARQEMKKYFDEVMVQMDYIDVLINGATLCDERNIDATINTNLTGMMNTVATVLPYMDRKMGGSGGLIVNVTSVIGLDPSPVFCAYSASKFGVIGFTRSLADPLYYTQNGVAVMAVCCGPTKVFVDRELNAFLEYGQTFADRLRCAPCQSTASCGQNIVTAIERSENGQIWIADKGGLEMVTLHWYWHMADQFLSYMQSTDDDNQEQFVSGRR.

Residue 11–34 (YVADCGGIALETSKVLMTKNIAKL) coordinates NAD(+). Substrate is bound at residue Ser139. Catalysis depends on Tyr152, which acts as the Proton acceptor.

Belongs to the short-chain dehydrogenases/reductases (SDR) family.

This Drosophila guanche (Fruit fly) protein is Alcohol dehydrogenase-related 31 kDa protein (Adhr).